The primary structure comprises 335 residues: Acetyl-coenzyme A carboxylase carboxyl transferase subunit alpha (335 aa).

Residues 40 to 294 enclose the CoA carboxyltransferase C-terminal domain; that stretch reads QLETLAARRR…KEAIEKHLNA (255 aa).

The protein belongs to the AccA family. As to quaternary structure, acetyl-CoA carboxylase is a heterohexamer composed of biotin carboxyl carrier protein (AccB), biotin carboxylase (AccC) and two subunits each of ACCase subunit alpha (AccA) and ACCase subunit beta (AccD).

It is found in the cytoplasm. It catalyses the reaction N(6)-carboxybiotinyl-L-lysyl-[protein] + acetyl-CoA = N(6)-biotinyl-L-lysyl-[protein] + malonyl-CoA. It participates in lipid metabolism; malonyl-CoA biosynthesis; malonyl-CoA from acetyl-CoA: step 1/1. Component of the acetyl coenzyme A carboxylase (ACC) complex. First, biotin carboxylase catalyzes the carboxylation of biotin on its carrier protein (BCCP) and then the CO(2) group is transferred by the carboxyltransferase to acetyl-CoA to form malonyl-CoA. This is Acetyl-coenzyme A carboxylase carboxyl transferase subunit alpha from Prochlorococcus marinus (strain MIT 9215).